Here is a 292-residue protein sequence, read N- to C-terminus: N-acetylneuraminate lyase (292 aa).

Residues S46 and T47 each coordinate aceneuramate. Y135 (proton donor) is an active-site residue. Catalysis depends on K163, which acts as the Schiff-base intermediate with substrate. Aceneuramate is bound by residues T165, G187, D189, E190, and S206.

Belongs to the DapA family. NanA subfamily. In terms of assembly, homotetramer.

The protein resides in the cytoplasm. The catalysed reaction is aceneuramate = aldehydo-N-acetyl-D-mannosamine + pyruvate. It functions in the pathway amino-sugar metabolism; N-acetylneuraminate degradation; D-fructose 6-phosphate from N-acetylneuraminate: step 1/5. Catalyzes the reversible aldol cleavage of N-acetylneuraminic acid (sialic acid; Neu5Ac) to form pyruvate and N-acetylmannosamine (ManNAc) via a Schiff base intermediate. The polypeptide is N-acetylneuraminate lyase (Lactiplantibacillus plantarum (strain ATCC BAA-793 / NCIMB 8826 / WCFS1) (Lactobacillus plantarum)).